The sequence spans 20 residues: Succinate--CoA ligase [ADP-forming] subunit beta, mitochondrial (20 aa).

In terms of domain architecture, ATP-grasp spans 8-20 (SMELLQEAGVSIP).

It belongs to the succinate/malate CoA ligase beta subunit family. ATP-specific subunit beta subfamily. As to quaternary structure, heterodimer of an alpha and a beta subunit. The beta subunit determines specificity for ATP. Interacts with ALAS2.

It localises to the mitochondrion. The catalysed reaction is succinate + ATP + CoA = succinyl-CoA + ADP + phosphate. Its pathway is carbohydrate metabolism; tricarboxylic acid cycle; succinate from succinyl-CoA (ligase route): step 1/1. In terms of biological role, ATP-specific succinyl-CoA synthetase functions in the citric acid cycle (TCA), coupling the hydrolysis of succinyl-CoA to the synthesis of ATP and thus represents the only step of substrate-level phosphorylation in the TCA. The beta subunit provides nucleotide specificity of the enzyme and binds the substrate succinate, while the binding sites for coenzyme A and phosphate are found in the alpha subunit. The chain is Succinate--CoA ligase [ADP-forming] subunit beta, mitochondrial from Canis lupus familiaris (Dog).